The chain runs to 282 residues: Ubiquinone biosynthesis protein COQ4 homolog, mitochondrial (282 aa).

A mitochondrion-targeting transit peptide spans 1 to 30; it reads MFVRKSCYSLINATRRCLRYRQLSSTTAGT. H186, D187, H190, and E202 together coordinate Zn(2+).

It belongs to the COQ4 family. As to quaternary structure, component of a multi-subunit COQ enzyme complex. Zn(2+) serves as cofactor.

It localises to the mitochondrion inner membrane. The catalysed reaction is a 4-hydroxy-3-methoxy-5-(all-trans-polyprenyl)benzoate + H(+) = a 2-methoxy-6-(all-trans-polyprenyl)phenol + CO2. Its pathway is cofactor biosynthesis; ubiquinone biosynthesis. In terms of biological role, lyase that catalyzes the C1-decarboxylation of 4-hydroxy-3-methoxy-5-(all-trans-polyprenyl)benzoic acid into 2-methoxy-6-(all-trans-polyprenyl)phenol during ubiquinone biosynthesis. The polypeptide is Ubiquinone biosynthesis protein COQ4 homolog, mitochondrial (Anopheles gambiae (African malaria mosquito)).